Here is a 714-residue protein sequence, read N- to C-terminus: ATP-dependent RNA helicase MSS116, mitochondrial (714 aa).

A mitochondrion-targeting transit peptide spans methionine 1–tryptophan 37. Positions serine 74–glutamine 102 match the Q motif motif. In terms of domain architecture, Helicase ATP-binding spans methionine 106 to tyrosine 296. Alanine 119 to threonine 126 serves as a coordination point for ATP. The DEAD box signature appears at aspartate 234–aspartate 237. A Helicase C-terminal domain is found at histidine 335 to glycine 498. The disordered stretch occupies residues serine 581–glutamate 714. Composition is skewed to basic and acidic residues over residues arginine 619–serine 640, tyrosine 656–tyrosine 671, and serine 679–asparagine 697.

Belongs to the DEAD box helicase family. DDX18/HAS1 subfamily.

The protein resides in the mitochondrion matrix. It carries out the reaction ATP + H2O = ADP + phosphate + H(+). Functionally, ATP-dependent RNA helicase required for mitochondrial splicing of group I and II introns. Also required for efficient mitochondrial translation. This chain is ATP-dependent RNA helicase MSS116, mitochondrial (MSS116), found in Meyerozyma guilliermondii (strain ATCC 6260 / CBS 566 / DSM 6381 / JCM 1539 / NBRC 10279 / NRRL Y-324) (Yeast).